The sequence spans 495 residues: Growth/differentiation factor 5 (495 aa).

A signal peptide spans 1–27 (MRLPKLLTLLLWHLAWLDLELICTVLG). A propeptide spanning residues 28 to 375 (APDLGQRTPG…YLFSQRRKRR (348 aa)) is cleaved from the precursor. The segment at 30–162 (DLGQRTPGAK…KEPFRPPPIT (133 aa)) is disordered. The segment covering 124-137 (GGKASSKAGSAPSS) has biased composition (low complexity). A compositionally biased stretch (basic and acidic residues) spans 142 to 156 (KTREPGTPREPKEPF). N-linked (GlcNAc...) asparagine glycosylation occurs at Asn183. 3 disulfides stabilise this stretch: Cys394/Cys460, Cys423/Cys492, and Cys427/Cys494.

It belongs to the TGF-beta family. In terms of assembly, homodimer; disulfide-linked. Interacts with serine proteases, HTRA1 and HTRA3. Following LPS binding, may form a complex with CXCR4, HSP90AA1 and HSPA8. Interacts with high affinity with NOG; inhibits chondrogenesis. Interacts with high affinity with BMPR1B and lower affinity with BMPR1A; positively regulates chondrocyte differentiation and induces SMAD-dependent signaling. Interacts with FBN1 (via N-terminal domain) and FBN2. Interacts with TGFBR3.

It is found in the secreted. Its subcellular location is the cell membrane. Growth factor involved in bone and cartilage formation. During cartilage development regulates differentiation of chondrogenic tissue through two pathways. Firstly, positively regulates differentiation of chondrogenic tissue through its binding of high affinity with BMPR1B and of less affinity with BMPR1A, leading to induction of SMAD1-SMAD5-SMAD8 complex phosphorylation and then SMAD protein signaling transduction. Secondly, negatively regulates chondrogenic differentiation through its interaction with NOG. Required to prevent excessive muscle loss upon denervation. This function requires SMAD4 and is mediated by phosphorylated SMAD1/5/8. Binds bacterial lipopolysaccharide (LPS) and mediates LPS-induced inflammatory response, including TNF secretion by monocytes. The polypeptide is Growth/differentiation factor 5 (Gdf5) (Mus musculus (Mouse)).